Here is a 195-residue protein sequence, read N- to C-terminus: Dual-action ribosomal maturation protein DarP (195 aa).

This sequence belongs to the DarP family.

Its subcellular location is the cytoplasm. Functionally, member of a network of 50S ribosomal subunit biogenesis factors which assembles along the 30S-50S interface, preventing incorrect 23S rRNA structures from forming. Promotes peptidyl transferase center (PTC) maturation. The polypeptide is Dual-action ribosomal maturation protein DarP (Stenotrophomonas maltophilia (strain K279a)).